Consider the following 1315-residue polypeptide: Serine/threonine-protein kinase 36 (1315 aa).

The Protein kinase domain occupies 4–254 (YHVLEMIGEG…WPDLLYHPFI (251 aa)). Residues 10–18 (IGEGSFGRV) and Lys-33 each bind ATP. Asp-125 acts as the Proton acceptor in catalysis. Disordered stretches follow at residues 312–345 (EAMQ…PRLG) and 365–405 (SWAE…RSTD). A compositionally biased stretch (basic and acidic residues) spans 379-397 (RENRTTPDCERAFPEERPE).

This sequence belongs to the protein kinase superfamily. Ser/Thr protein kinase family. Interacts with SPAG16 and KIF27. Mg(2+) serves as cofactor.

It localises to the cytoplasm. The protein resides in the nucleus. Its subcellular location is the cytoskeleton. It is found in the cilium axoneme. It catalyses the reaction L-seryl-[protein] + ATP = O-phospho-L-seryl-[protein] + ADP + H(+). The enzyme catalyses L-threonyl-[protein] + ATP = O-phospho-L-threonyl-[protein] + ADP + H(+). Functionally, serine/threonine protein kinase which plays an important role in the sonic hedgehog (Shh) pathway by regulating the activity of GLI transcription factors. Controls the activity of the transcriptional regulators GLI1, GLI2 and GLI3 by opposing the effect of SUFU and promoting their nuclear localization. GLI2 requires an additional function of STK36 to become transcriptionally active, but the enzyme does not need to possess an active kinase catalytic site for this to occur. Required for postnatal development, possibly by regulating the homeostasis of cerebral spinal fluid or ciliary function. Essential for construction of the central pair apparatus of motile cilia. This is Serine/threonine-protein kinase 36 from Pongo abelii (Sumatran orangutan).